Here is a 172-residue protein sequence, read N- to C-terminus: Bifunctional protein PyrR (172 aa).

Residues 36–37 (TG), Arg-77, 94–102 (DDVLMSGRT), and Val-151 each bind substrate. Positions 90–102 (LVLVDDVLMSGRT) match the PRPP-binding motif.

It belongs to the purine/pyrimidine phosphoribosyltransferase family. PyrR subfamily.

It carries out the reaction UMP + diphosphate = 5-phospho-alpha-D-ribose 1-diphosphate + uracil. Its function is as follows. Regulates the transcription of the pyrimidine nucleotide (pyr) operon in response to exogenous pyrimidines. In terms of biological role, also displays a weak uracil phosphoribosyltransferase activity which is not physiologically significant. The chain is Bifunctional protein PyrR from Pseudomonas putida (Arthrobacter siderocapsulatus).